The primary structure comprises 474 residues: MRLSKTLVDMDMADYSAALDPAYTTLEFENVQVLTMGNDTSPSEGTNLNAPNSLGVSALCAICGDRATGKHYGASSCDGCKGFFRRSVRKNHMYSCRFSRQCVVDKDKRNQCRYCRLKKCFRAGMKKEAVQNERDRISTRRSSYEDSSLPSINALLQAEVLSRQITSPVSGINGDIRAKKIASIADVCESMKEQLLVLVEWAKYIPAFCELPLDDQVALLRAHAGEHLLLGATKRSMVFKDVLLLGNDYIVPRHCPELAEMSRVSIRILDELVLPFQELQIDDNEYAYLKAIIFFDPDAKGLSDPGKIKRLRSQVQVSLEDYINDRQYDSRGRFGELLLLLPTLQSITWQMIEQIQFIKLFGMAKIDNLLQEMLLGGSPSDAPHAHHPLHPHLMQEHMGTNVIVANTMPTHLSNGQMCEWPRPRGQAATPETPQPSPPGGSGSEPYKLLPGAVATIVKPLSAIPQPTITKQEVI.

The segment at residues 57–132 (SALCAICGDR…AGMKKEAVQN (76 aa)) is a DNA-binding region (nuclear receptor). 2 NR C4-type zinc fingers span residues 60 to 80 (CAICGDRATGKHYGASSCDGC) and 96 to 120 (CRFSRQCVVDKDKRNQCRYCRLKKC). Residues serine 142 and serine 143 each carry the phosphoserine modification. Tyrosine 144 bears the Phosphotyrosine mark. Residues 147 to 377 (SSLPSINALL…NLLQEMLLGG (231 aa)) form the NR LBD domain. Threonine 166 carries the phosphothreonine modification. Position 167 is a phosphoserine (serine 167). Glycyl lysine isopeptide (Lys-Gly) (interchain with G-Cter in ubiquitin) cross-links involve residues lysine 234 and lysine 307. Serine 313 bears the Phosphoserine; by AMPK mark. The 9aaTAD motif lies at 368-376 (NLLQEMLLG). Residues 419–447 (EWPRPRGQAATPETPQPSPPGGSGSEPYK) form a disordered region. 2 positions are modified to phosphothreonine: threonine 429 and threonine 432. At serine 436 the chain carries Phosphoserine. Position 458 is an N6-acetyllysine (lysine 458).

It belongs to the nuclear hormone receptor family. NR2 subfamily. Homodimerization is required for HNF4-alpha to bind to its recognition site. Interacts with CLOCK, BMAL1, CRY1, CRY2, PER1 and PER2. Interacts with NR0B2/SHP; the resulting heterodimer is transcriptionally inactive. Interacts with DDX3X; this interaction disrupts the interaction between HNF4 and NR0B2 that forms inactive heterodimers and enhances the formation of active HNF4 homodimers. Post-translationally, phosphorylated on tyrosine residue(s); phosphorylation is important for its DNA-binding activity. Phosphorylation may directly or indirectly play a regulatory role in the subnuclear distribution. Phosphorylation at Ser-313 by AMPK reduces the ability to form homodimers and bind DNA. In terms of processing, acetylation at Lys-458 lowers transcriptional activation by about two-fold.

The protein resides in the nucleus. Functionally, transcriptional regulator which controls the expression of hepatic genes during the transition of endodermal cells to hepatic progenitor cells, facilitating the recruitment of RNA pol II to the promoters of target genes. Activates the transcription of CYP2C38. Represses the CLOCK-BMAL1 transcriptional activity and is essential for circadian rhythm maintenance and period regulation in the liver and colon cells. The protein is Hepatocyte nuclear factor 4-alpha (HNF4A) of Homo sapiens (Human).